A 455-amino-acid chain; its full sequence is Nuclear receptor subfamily 6 group A member 1-B (455 aa).

The nuclear receptor DNA-binding region spans 38-113; sequence ERWCLICGDR…MGMNRKAIRE (76 aa). NR C4-type zinc fingers lie at residues 41-61 and 77-96; these read CLICGDRASGLHYGIISCEGC and CNRDKNCQMSRKQRNRCQYC. The interval 145–173 is disordered; it reads EGSDLSDSWSHGYSNHSSPGNSLSEGGQS. Over residues 149-165 the composition is skewed to polar residues; that stretch reads LSDSWSHGYSNHSSPGN. The region spanning 215 to 446 is the NR LBD domain; sequence QTHTLTGQIL…YSCTTNQNPW (232 aa).

It belongs to the nuclear hormone receptor family. NR6 subfamily. Homodimer.

Its subcellular location is the nucleus. Its function is as follows. Probable orphan nuclear receptor. Binds to a response element containing repeats of the motif 5'-AGGTCA-3'. The protein is Nuclear receptor subfamily 6 group A member 1-B of Danio rerio (Zebrafish).